Here is a 198-residue protein sequence, read N- to C-terminus: B9 domain-containing protein 1 (198 aa).

Residues 8–126 (FLLNVSGQIE…TIPMFVPESS (119 aa)) form the C2 B9-type domain.

This sequence belongs to the B9D family. Part of the tectonic-like complex (also named B9 complex).

The protein localises to the cytoplasm. Its subcellular location is the cytoskeleton. The protein resides in the cilium basal body. Its function is as follows. Component of the tectonic-like complex, a complex localized at the transition zone of primary cilia and acting as a barrier that prevents diffusion of transmembrane proteins between the cilia and plasma membranes. Required for ciliogenesis and sonic hedgehog/SHH signaling. This Xenopus laevis (African clawed frog) protein is B9 domain-containing protein 1 (b9d1).